Consider the following 212-residue polypeptide: Peptide methionine sulfoxide reductase MsrA (212 aa).

The active site involves Cys52.

It belongs to the MsrA Met sulfoxide reductase family.

The catalysed reaction is L-methionyl-[protein] + [thioredoxin]-disulfide + H2O = L-methionyl-(S)-S-oxide-[protein] + [thioredoxin]-dithiol. It catalyses the reaction [thioredoxin]-disulfide + L-methionine + H2O = L-methionine (S)-S-oxide + [thioredoxin]-dithiol. In terms of biological role, has an important function as a repair enzyme for proteins that have been inactivated by oxidation. Catalyzes the reversible oxidation-reduction of methionine sulfoxide in proteins to methionine. The protein is Peptide methionine sulfoxide reductase MsrA of Salmonella choleraesuis (strain SC-B67).